A 494-amino-acid chain; its full sequence is UPF0371 protein SPT_0390 (494 aa).

This sequence belongs to the UPF0371 family.

The protein is UPF0371 protein SPT_0390 of Streptococcus pneumoniae (strain Taiwan19F-14).